A 224-amino-acid chain; its full sequence is Probable GTP-binding protein EngB (224 aa).

Positions Val-31 to Pro-204 constitute an EngB-type G domain. GTP contacts are provided by residues Gly-39–Ser-46, Gly-65–Leu-69, Asp-83–Gly-86, Thr-150–Asp-153, and Phe-183–Ser-185. The Mg(2+) site is built by Ser-46 and Thr-67.

It belongs to the TRAFAC class TrmE-Era-EngA-EngB-Septin-like GTPase superfamily. EngB GTPase family. Mg(2+) is required as a cofactor.

In terms of biological role, necessary for normal cell division and for the maintenance of normal septation. In Shewanella piezotolerans (strain WP3 / JCM 13877), this protein is Probable GTP-binding protein EngB.